We begin with the raw amino-acid sequence, 212 residues long: Adenine phosphoribosyltransferase (212 aa).

The protein belongs to the purine/pyrimidine phosphoribosyltransferase family. Homodimer.

It is found in the cytoplasm. The catalysed reaction is AMP + diphosphate = 5-phospho-alpha-D-ribose 1-diphosphate + adenine. It participates in purine metabolism; AMP biosynthesis via salvage pathway; AMP from adenine: step 1/1. Its function is as follows. Catalyzes a salvage reaction resulting in the formation of AMP, that is energically less costly than de novo synthesis. This is Adenine phosphoribosyltransferase from Mycobacterium tuberculosis (strain ATCC 25618 / H37Rv).